The following is a 144-amino-acid chain: Large ribosomal subunit protein uL15 (144 aa).

Positions 1-57 (MELNNLKPAEGAKHAKRRVGRGIGSGLGKTAGRGHKGQKSRSGGFHKVGFEGGQMPL) are disordered. Residues 21–31 (RGIGSGLGKTA) show a composition bias toward gly residues.

Belongs to the universal ribosomal protein uL15 family. As to quaternary structure, part of the 50S ribosomal subunit.

In terms of biological role, binds to the 23S rRNA. The protein is Large ribosomal subunit protein uL15 of Paraburkholderia xenovorans (strain LB400).